The sequence spans 379 residues: MPTVFPDDSVGLVSPQTLHFNEPLELTSGKSLAEYDLVIETYGELNATQSNAVLICHALSGHHHAAGYHSAEDRKPGWWDSCIGPGKPIDTRRFFVVALNNLGGCNGSSGPASINPATGKVYGADFPMVTVEDWVHSQARLADRLGIRQWAAVVGGSLGGMQALQWTISYPERVRHCLCIASAPKLSAQNIAFNEVARQAILSDPEFLGGYFQEQGVIPKRGLKLARMVGHITYLSDDAMGAKFGRVLKTEKLNYDLHSVEFQVESYLRYQGEEFSTRFDANTYLLMTKALDYFDPAAAHGDDLVRTLEGVEADFCLMSFTTDWRFSPARSREIVDALIAAKKNVSYLEIDAPQGHDAFLMPIPRYLQAFSGYMNRISV.

The AB hydrolase-1 domain maps to 51 to 360 (NAVLICHALS…DAPQGHDAFL (310 aa)). Residue serine 157 is the Nucleophile of the active site. Arginine 227 lines the substrate pocket. Catalysis depends on residues aspartate 323 and histidine 356. Residue aspartate 357 coordinates substrate.

Belongs to the AB hydrolase superfamily. MetX family. In terms of assembly, homodimer.

Its subcellular location is the cytoplasm. The enzyme catalyses L-homoserine + succinyl-CoA = O-succinyl-L-homoserine + CoA. Its pathway is amino-acid biosynthesis; L-methionine biosynthesis via de novo pathway; O-succinyl-L-homoserine from L-homoserine: step 1/1. In terms of biological role, transfers a succinyl group from succinyl-CoA to L-homoserine, forming succinyl-L-homoserine. In Pseudomonas paraeruginosa (strain DSM 24068 / PA7) (Pseudomonas aeruginosa (strain PA7)), this protein is Homoserine O-succinyltransferase.